Consider the following 253-residue polypeptide: Ubiquinone/menaquinone biosynthesis C-methyltransferase UbiE (253 aa).

S-adenosyl-L-methionine-binding positions include threonine 76, aspartate 97, and 125–126 (NA).

It belongs to the class I-like SAM-binding methyltransferase superfamily. MenG/UbiE family.

It catalyses the reaction a 2-demethylmenaquinol + S-adenosyl-L-methionine = a menaquinol + S-adenosyl-L-homocysteine + H(+). It carries out the reaction a 2-methoxy-6-(all-trans-polyprenyl)benzene-1,4-diol + S-adenosyl-L-methionine = a 5-methoxy-2-methyl-3-(all-trans-polyprenyl)benzene-1,4-diol + S-adenosyl-L-homocysteine + H(+). The protein operates within quinol/quinone metabolism; menaquinone biosynthesis; menaquinol from 1,4-dihydroxy-2-naphthoate: step 2/2. Its pathway is cofactor biosynthesis; ubiquinone biosynthesis. In terms of biological role, methyltransferase required for the conversion of demethylmenaquinol (DMKH2) to menaquinol (MKH2) and the conversion of 2-polyprenyl-6-methoxy-1,4-benzoquinol (DDMQH2) to 2-polyprenyl-3-methyl-6-methoxy-1,4-benzoquinol (DMQH2). This chain is Ubiquinone/menaquinone biosynthesis C-methyltransferase UbiE, found in Rhodopseudomonas palustris (strain ATCC BAA-98 / CGA009).